The chain runs to 176 residues: Shikimate kinase (176 aa).

12–17 contacts ATP; it reads GSGKST. Serine 16 is a binding site for Mg(2+). Substrate is bound by residues aspartate 34, arginine 58, and glycine 80. Arginine 117 serves as a coordination point for ATP. Substrate is bound at residue arginine 136. Residue arginine 153 coordinates ATP.

The protein belongs to the shikimate kinase family. In terms of assembly, monomer. Mg(2+) serves as cofactor.

The protein localises to the cytoplasm. The catalysed reaction is shikimate + ATP = 3-phosphoshikimate + ADP + H(+). The protein operates within metabolic intermediate biosynthesis; chorismate biosynthesis; chorismate from D-erythrose 4-phosphate and phosphoenolpyruvate: step 5/7. Catalyzes the specific phosphorylation of the 3-hydroxyl group of shikimic acid using ATP as a cosubstrate. The sequence is that of Shikimate kinase from Mycobacterium bovis (strain ATCC BAA-935 / AF2122/97).